Reading from the N-terminus, the 93-residue chain is Phosphoribosyl-ATP pyrophosphatase (93 aa).

It belongs to the PRA-PH family.

It is found in the cytoplasm. The enzyme catalyses 1-(5-phospho-beta-D-ribosyl)-ATP + H2O = 1-(5-phospho-beta-D-ribosyl)-5'-AMP + diphosphate + H(+). It participates in amino-acid biosynthesis; L-histidine biosynthesis; L-histidine from 5-phospho-alpha-D-ribose 1-diphosphate: step 2/9. The sequence is that of Phosphoribosyl-ATP pyrophosphatase from Mycobacterium sp. (strain JLS).